Consider the following 332-residue polypeptide: Glyceraldehyde-3-phosphate dehydrogenase (332 aa).

Residues 12–13, Asp-34, Lys-78, and Thr-120 contribute to the NAD(+) site; that span reads RI. Residues 149-151, Thr-180, 209-210, and Arg-232 each bind D-glyceraldehyde 3-phosphate; these read SCT and TG. Catalysis depends on Cys-150, which acts as the Nucleophile. Asn-314 serves as a coordination point for NAD(+).

This sequence belongs to the glyceraldehyde-3-phosphate dehydrogenase family. In terms of assembly, homotetramer.

It is found in the cytoplasm. It catalyses the reaction D-glyceraldehyde 3-phosphate + phosphate + NAD(+) = (2R)-3-phospho-glyceroyl phosphate + NADH + H(+). Its pathway is carbohydrate degradation; glycolysis; pyruvate from D-glyceraldehyde 3-phosphate: step 1/5. Functionally, catalyzes the oxidative phosphorylation of glyceraldehyde 3-phosphate (G3P) to 1,3-bisphosphoglycerate (BPG) using the cofactor NAD. The first reaction step involves the formation of a hemiacetal intermediate between G3P and a cysteine residue, and this hemiacetal intermediate is then oxidized to a thioester, with concomitant reduction of NAD to NADH. The reduced NADH is then exchanged with the second NAD, and the thioester is attacked by a nucleophilic inorganic phosphate to produce BPG. This is Glyceraldehyde-3-phosphate dehydrogenase (gapA) from Buchnera aphidicola subsp. Schizaphis graminum (strain Sg).